A 94-amino-acid polypeptide reads, in one-letter code: Co-chaperonin GroES (94 aa).

This sequence belongs to the GroES chaperonin family. Heptamer of 7 subunits arranged in a ring. Interacts with the chaperonin GroEL.

The protein resides in the cytoplasm. In terms of biological role, together with the chaperonin GroEL, plays an essential role in assisting protein folding. The GroEL-GroES system forms a nano-cage that allows encapsulation of the non-native substrate proteins and provides a physical environment optimized to promote and accelerate protein folding. GroES binds to the apical surface of the GroEL ring, thereby capping the opening of the GroEL channel. In Alkaliphilus oremlandii (strain OhILAs) (Clostridium oremlandii (strain OhILAs)), this protein is Co-chaperonin GroES.